Here is an 805-residue protein sequence, read N- to C-terminus: Leucine--tRNA ligase (805 aa).

Positions P40–H51 match the 'HIGH' region motif. The 'KMSKS' region signature appears at K576–S580. K579 lines the ATP pocket.

This sequence belongs to the class-I aminoacyl-tRNA synthetase family.

It localises to the cytoplasm. It carries out the reaction tRNA(Leu) + L-leucine + ATP = L-leucyl-tRNA(Leu) + AMP + diphosphate. The sequence is that of Leucine--tRNA ligase from Geobacillus kaustophilus (strain HTA426).